Consider the following 403-residue polypeptide: 4-hydroxy-3-methylbut-2-en-1-yl diphosphate synthase (flavodoxin) (403 aa).

A compositionally biased stretch (basic and acidic residues) spans 1-16 (MNTENPIEKPFRKTGD). The disordered stretch occupies residues 1–31 (MNTENPIEKPFRKTGDPVDLTSESPLHPRRK). The [4Fe-4S] cluster site is built by Cys291, Cys294, Cys326, and Glu333.

The protein belongs to the IspG family. [4Fe-4S] cluster serves as cofactor.

It carries out the reaction (2E)-4-hydroxy-3-methylbut-2-enyl diphosphate + oxidized [flavodoxin] + H2O + 2 H(+) = 2-C-methyl-D-erythritol 2,4-cyclic diphosphate + reduced [flavodoxin]. Its pathway is isoprenoid biosynthesis; isopentenyl diphosphate biosynthesis via DXP pathway; isopentenyl diphosphate from 1-deoxy-D-xylulose 5-phosphate: step 5/6. Converts 2C-methyl-D-erythritol 2,4-cyclodiphosphate (ME-2,4cPP) into 1-hydroxy-2-methyl-2-(E)-butenyl 4-diphosphate. This chain is 4-hydroxy-3-methylbut-2-en-1-yl diphosphate synthase (flavodoxin), found in Bifidobacterium longum (strain NCC 2705).